Here is a 245-residue protein sequence, read N- to C-terminus: Biosynthetic peptidoglycan transglycosylase (245 aa).

A helical transmembrane segment spans residues 24 to 44 (LVVIGAWLAGILLFSFLPVPF).

The protein belongs to the glycosyltransferase 51 family.

The protein resides in the cell inner membrane. It catalyses the reaction [GlcNAc-(1-&gt;4)-Mur2Ac(oyl-L-Ala-gamma-D-Glu-L-Lys-D-Ala-D-Ala)](n)-di-trans,octa-cis-undecaprenyl diphosphate + beta-D-GlcNAc-(1-&gt;4)-Mur2Ac(oyl-L-Ala-gamma-D-Glu-L-Lys-D-Ala-D-Ala)-di-trans,octa-cis-undecaprenyl diphosphate = [GlcNAc-(1-&gt;4)-Mur2Ac(oyl-L-Ala-gamma-D-Glu-L-Lys-D-Ala-D-Ala)](n+1)-di-trans,octa-cis-undecaprenyl diphosphate + di-trans,octa-cis-undecaprenyl diphosphate + H(+). It functions in the pathway cell wall biogenesis; peptidoglycan biosynthesis. In terms of biological role, peptidoglycan polymerase that catalyzes glycan chain elongation from lipid-linked precursors. The protein is Biosynthetic peptidoglycan transglycosylase of Pectobacterium atrosepticum (strain SCRI 1043 / ATCC BAA-672) (Erwinia carotovora subsp. atroseptica).